A 118-amino-acid chain; its full sequence is Ribonuclease P protein component (118 aa).

The protein belongs to the RnpA family. Consists of a catalytic RNA component (M1 or rnpB) and a protein subunit.

The catalysed reaction is Endonucleolytic cleavage of RNA, removing 5'-extranucleotides from tRNA precursor.. In terms of biological role, RNaseP catalyzes the removal of the 5'-leader sequence from pre-tRNA to produce the mature 5'-terminus. It can also cleave other RNA substrates such as 4.5S RNA. The protein component plays an auxiliary but essential role in vivo by binding to the 5'-leader sequence and broadening the substrate specificity of the ribozyme. In Shewanella frigidimarina (strain NCIMB 400), this protein is Ribonuclease P protein component.